The chain runs to 108 residues: MKFVLLFGVLLVTLFSYSSAEMLDDFDQADEDELLSLIEKEEARAKECTPRFYDCSHDRHSCCRSELFKDVCTCFYPEGGDNEVCTCQQPKHLKYMEKAAGKIKNLFG.

The signal sequence occupies residues 1-20; it reads MKFVLLFGVLLVTLFSYSSA. The propeptide occupies 21–44; that stretch reads EMLDDFDQADEDELLSLIEKEEAR. 4 disulfide bridges follow: C48–C63, C55–C72, C62–C87, and C74–C85.

It belongs to the neurotoxin 19 (CSTX) family. 01 subfamily. As to expression, expressed by the venom gland.

Its subcellular location is the secreted. In Lycosa singoriensis (Wolf spider), this protein is U3-lycotoxin-Ls1w.